The primary structure comprises 452 residues: Putative purine permease CPE0397 (452 aa).

The next 12 helical transmembrane spans lie at 34–54 (IFAAFGGIIVVPLVIATSLGF), 58–78 (VTTALISASILGSGLATIIQA), 83–103 (KVGARVACIMGTDFTFVSPAI), 108–128 (VLGLPGIIGATILGSLFEVIL), 138–158 (FFPPLVTGTVVALIGLTLLPV), 172–192 (YASLENLAVAMFVLVITLLLN), 201–221 (SASILIGIVVGYIVCIPLGLV), 250–270 (MAFIPAYFVATIGTVGCLKAI), 326–346 (AVMAGILLVILGFLPKVAAII), 348–368 (GIPNPVLGGVGIMMFGTVAAA), 383–403 (LLIIAISMGLGLGVTFRPDVI), and 412–432 (MIFSSGISTGTIAALILNAVL).

Belongs to the nucleobase:cation symporter-2 (NCS2) (TC 2.A.40) family.

The protein localises to the cell membrane. The protein is Putative purine permease CPE0397 (cpx) of Clostridium perfringens (strain 13 / Type A).